A 460-amino-acid chain; its full sequence is Serine protease HTRA1 (460 aa).

Positions 1–18 (MAMLWLAVLLTCGAPAAL) are cleaved as a signal peptide. Positions 22 to 92 (SGVGCPSRCD…NGGVARCQCP (71 aa)) constitute an IGFBP N-terminal domain. 8 disulfides stabilise this stretch: Cys-26–Cys-51, Cys-30–Cys-53, Cys-35–Cys-54, Cys-42–Cys-57, Cys-65–Cys-80, Cys-74–Cys-89, Cys-91–Cys-109, and Cys-98–Cys-134. In terms of domain architecture, Kazal-like spans 74–136 (CASGLRCVKN…IPIQRGDCQQ (63 aa)). The tract at residues 183–343 (GSGFIVSEDG…IPSDKIRKFL (161 aa)) is serine protease. Catalysis depends on charge relay system residues His-199, Asp-229, and Ser-307. In terms of domain architecture, PDZ spans 344-447 (AESHNRQSTG…LHLVIRRGNE (104 aa)).

It belongs to the peptidase S1C family. In terms of assembly, forms homotrimers. In the presence of substrate, may form higher-order multimers in a PDZ-independent manner.

It is found in the cell membrane. It localises to the secreted. The protein localises to the cytoplasm. The protein resides in the cytosol. Functionally, serine protease with a variety of targets, including extracellular matrix proteins and proteoglycans such as biglycan, syndecan-4 and glypican-4. Through cleavage of proteoglycans, may release soluble FGF-glycosaminoglycan complexes that promote the range and intensity of FGF signals in the extracellular space. Consequently, facilitates inductive processes in the developing embryo, such as posteriorization, mesoderm induction and neuronal differentiation. Regulates the availability of insulin-like growth factors (IGFs) by cleaving IGF-binding proteins. Inhibits signaling mediated by TGF-beta family members. Consequently, may regulate many physiological processes. Intracellularly, degrades TSC2, leading to the activation of TSC2 downstream targets. This chain is Serine protease HTRA1 (htra1), found in Xenopus tropicalis (Western clawed frog).